The primary structure comprises 285 residues: Shikimate dehydrogenase (NADP(+)) (285 aa).

Shikimate contacts are provided by residues 20–22 (SRS) and T67. Catalysis depends on K71, which acts as the Proton acceptor. Residues N93 and D108 each coordinate shikimate. NADP(+)-binding positions include 132–136 (GAGGA) and M224. Y226 contributes to the shikimate binding site. Position 248 (G248) interacts with NADP(+).

This sequence belongs to the shikimate dehydrogenase family. As to quaternary structure, homodimer.

The catalysed reaction is shikimate + NADP(+) = 3-dehydroshikimate + NADPH + H(+). Its pathway is metabolic intermediate biosynthesis; chorismate biosynthesis; chorismate from D-erythrose 4-phosphate and phosphoenolpyruvate: step 4/7. In terms of biological role, involved in the biosynthesis of the chorismate, which leads to the biosynthesis of aromatic amino acids. Catalyzes the reversible NADPH linked reduction of 3-dehydroshikimate (DHSA) to yield shikimate (SA). The sequence is that of Shikimate dehydrogenase (NADP(+)) from Bordetella avium (strain 197N).